Here is a 192-residue protein sequence, read N- to C-terminus: MAQLYFYYSAMNAGKSTSLLQSSYNYRERGMNTLVMTASIDDRYGKGKVASRIGIESDAQVFSSHDNLIEMITAAHQENHLSCVLVDECQFLSKEQVKQLTYIVDKIDIPVLCYGLRTDFQGELFSGSHYLLAWADKLVELKTICHCGRKANMVVRLDGEGKVMREGEQVAIGGNESYESVCRKHFREFIWD.

Residues 9 to 16 (SAMNAGKS) and 87 to 90 (DECQ) each bind ATP. Glu-88 serves as the catalytic Proton acceptor. Cys-145, Cys-147, Cys-182, and His-185 together coordinate Zn(2+).

This sequence belongs to the thymidine kinase family. In terms of assembly, homotetramer.

The protein resides in the cytoplasm. The enzyme catalyses thymidine + ATP = dTMP + ADP + H(+). The polypeptide is Thymidine kinase (Shewanella oneidensis (strain ATCC 700550 / JCM 31522 / CIP 106686 / LMG 19005 / NCIMB 14063 / MR-1)).